Reading from the N-terminus, the 308-residue chain is F-actin-capping protein subunit alpha (308 aa).

The protein belongs to the F-actin-capping protein alpha subunit family. As to quaternary structure, component of the F-actin capping complex, composed of a heterodimer of an alpha and a beta subunit.

Functionally, F-actin-capping proteins bind in a Ca(2+)-independent manner to the fast growing ends of actin filaments (barbed end) thereby blocking the exchange of subunits at these ends. Unlike other capping proteins (such as gelsolin and severin), these proteins do not sever actin filaments. The chain is F-actin-capping protein subunit alpha from Arabidopsis thaliana (Mouse-ear cress).